The sequence spans 197 residues: Small ribosomal subunit protein uS2 (197 aa).

The protein belongs to the universal ribosomal protein uS2 family.

This chain is Small ribosomal subunit protein uS2 (rps2), found in Archaeoglobus fulgidus (strain ATCC 49558 / DSM 4304 / JCM 9628 / NBRC 100126 / VC-16).